Here is a 143-residue protein sequence, read N- to C-terminus: Large ribosomal subunit protein uL11 (143 aa).

Belongs to the universal ribosomal protein uL11 family. In terms of assembly, part of the ribosomal stalk of the 50S ribosomal subunit. Interacts with L10 and the large rRNA to form the base of the stalk. L10 forms an elongated spine to which L12 dimers bind in a sequential fashion forming a multimeric L10(L12)X complex. One or more lysine residues are methylated.

Forms part of the ribosomal stalk which helps the ribosome interact with GTP-bound translation factors. The chain is Large ribosomal subunit protein uL11 from Leptothrix cholodnii (strain ATCC 51168 / LMG 8142 / SP-6) (Leptothrix discophora (strain SP-6)).